The sequence spans 406 residues: S-adenosylmethionine synthase (406 aa).

Residue His16 participates in ATP binding. Asp18 contributes to the Mg(2+) binding site. Glu44 serves as a coordination point for K(+). L-methionine-binding residues include Glu57 and Gln100. The tract at residues 100-110 (QSVDIAQGVDR) is flexible loop. ATP contacts are provided by residues 165–167 (DAK), Asp241, 247–248 (RK), Ala264, and Lys268. Asp241 contributes to the L-methionine binding site. Position 272 (Lys272) interacts with L-methionine.

It belongs to the AdoMet synthase family. As to quaternary structure, homotetramer; dimer of dimers. Mg(2+) is required as a cofactor. Requires K(+) as cofactor.

Its subcellular location is the cytoplasm. The enzyme catalyses L-methionine + ATP + H2O = S-adenosyl-L-methionine + phosphate + diphosphate. It participates in amino-acid biosynthesis; S-adenosyl-L-methionine biosynthesis; S-adenosyl-L-methionine from L-methionine: step 1/1. In terms of biological role, catalyzes the formation of S-adenosylmethionine (AdoMet) from methionine and ATP. The overall synthetic reaction is composed of two sequential steps, AdoMet formation and the subsequent tripolyphosphate hydrolysis which occurs prior to release of AdoMet from the enzyme. In Chromohalobacter salexigens (strain ATCC BAA-138 / DSM 3043 / CIP 106854 / NCIMB 13768 / 1H11), this protein is S-adenosylmethionine synthase.